A 187-amino-acid chain; its full sequence is Proenkephalin-A (187 aa).

4 propeptides span residues 52–70 (MDEL…EILA), 80–143 (DAEE…KMLQ), 153–163 (VGRPEWWMDYQ), and 173–187 (FADS…ESYS). Residues 81–132 (AEEEEDALASSSDLLKELLGPGETETAAAPRGRDDEDVSKSHGGFMRALKGS) are disordered. Positions 88-99 (LASSSDLLKELL) are enriched in low complexity. Residues 111 to 120 (RGRDDEDVSK) show a composition bias toward basic and acidic residues. Phosphoserine is present on Ser187.

This sequence belongs to the opioid neuropeptide precursor family. Processed and degraded by ACE. Post-translationally, the N-terminal domain contains 6 conserved cysteines thought to be involved in disulfide bonding and/or processing. In terms of processing, proenkephalin-A is cleaved by CTSL to generate Met-enkephalin.

The protein resides in the cytoplasmic vesicle. The protein localises to the secretory vesicle. Its subcellular location is the chromaffin granule lumen. It is found in the secreted. In terms of biological role, neuropeptide that competes with and mimic the effects of opiate drugs. They play a role in a number of physiologic functions, including pain perception and responses to stress. The chain is Proenkephalin-A (PENK) from Felis catus (Cat).